The chain runs to 47 residues: Large ribosomal subunit protein eL40 (47 aa).

The protein belongs to the eukaryotic ribosomal protein eL40 family.

The chain is Large ribosomal subunit protein eL40 from Halobacterium salinarum (strain ATCC 29341 / DSM 671 / R1).